The following is a 119-amino-acid chain: MVPRIFAPAYVSVCLLLLCPREVIAPAGSEPWLCQPAPRCGDKIYNPLEQCCYNDAIVSLSETRQCGPPCTFWPCFELCCLDSFGLTNDFVVKLKVQGVNSQCHSSPISSKCESRRRFP.

The signal sequence occupies residues 1–25; the sequence is MVPRIFAPAYVSVCLLLLCPREVIA.

It belongs to the IGFL family. As to expression, detected in cerebellum, heart, placenta, spleen, stomach, testis and thymus.

The protein resides in the secreted. In terms of biological role, potential ligand of the IGFLR1 cell membrane receptor. This is Insulin growth factor-like family member 2 (IGFL2) from Homo sapiens (Human).